A 431-amino-acid polypeptide reads, in one-letter code: Gamma-glutamyl phosphate reductase (431 aa).

Belongs to the gamma-glutamyl phosphate reductase family.

It localises to the cytoplasm. It carries out the reaction L-glutamate 5-semialdehyde + phosphate + NADP(+) = L-glutamyl 5-phosphate + NADPH + H(+). It participates in amino-acid biosynthesis; L-proline biosynthesis; L-glutamate 5-semialdehyde from L-glutamate: step 2/2. In terms of biological role, catalyzes the NADPH-dependent reduction of L-glutamate 5-phosphate into L-glutamate 5-semialdehyde and phosphate. The product spontaneously undergoes cyclization to form 1-pyrroline-5-carboxylate. The chain is Gamma-glutamyl phosphate reductase from Acaryochloris marina (strain MBIC 11017).